A 224-amino-acid chain; its full sequence is Putative gastrointestinal growth factor xP4 (224 aa).

The first 17 residues, 1-17 (MANSVFWAIAVALVLGA), serve as a signal peptide directing secretion. P-type domains follow at residues 25–68 (YRCG…YTPW), 73–117 (TICN…YQPI), 123–167 (RDCS…FKPE), and 173–216 (LQCA…FYPD). Disulfide bonds link cysteine 27-cysteine 53, cysteine 37-cysteine 52, cysteine 47-cysteine 64, cysteine 75-cysteine 102, cysteine 86-cysteine 101, cysteine 96-cysteine 113, cysteine 125-cysteine 152, cysteine 136-cysteine 151, cysteine 146-cysteine 163, cysteine 175-cysteine 201, cysteine 185-cysteine 200, and cysteine 195-cysteine 212. The N-linked (GlcNAc...) asparagine glycan is linked to asparagine 104.

Post-translationally, glycosylated. As to expression, stomach mucosa.

The protein localises to the secreted. Functionally, may act as a growth factor. The polypeptide is Putative gastrointestinal growth factor xP4 (p4) (Xenopus laevis (African clawed frog)).